The following is a 289-amino-acid chain: Oxaloacetate decarboxylase 1 (289 aa).

S50 contributes to the substrate binding site. D88 is a binding site for Mg(2+). Residues R159 and H235 each contribute to the substrate site.

Belongs to the isocitrate lyase/PEP mutase superfamily. Oxaloacetate decarboxylase family. Homotetramer; dimer of dimers. It depends on Mg(2+) as a cofactor.

It catalyses the reaction oxaloacetate + H(+) = pyruvate + CO2. Catalyzes the decarboxylation of oxaloacetate into pyruvate. Seems to play a role in maintaining cellular concentrations of bicarbonate and pyruvate. This is Oxaloacetate decarboxylase 1 from Pseudomonas putida (strain W619).